The following is a 295-amino-acid chain: Bifunctional protein FolD (295 aa).

NADP(+)-binding positions include 163-165 (GRS), S188, and I229.

This sequence belongs to the tetrahydrofolate dehydrogenase/cyclohydrolase family. As to quaternary structure, homodimer.

It carries out the reaction (6R)-5,10-methylene-5,6,7,8-tetrahydrofolate + NADP(+) = (6R)-5,10-methenyltetrahydrofolate + NADPH. The enzyme catalyses (6R)-5,10-methenyltetrahydrofolate + H2O = (6R)-10-formyltetrahydrofolate + H(+). Its pathway is one-carbon metabolism; tetrahydrofolate interconversion. In terms of biological role, catalyzes the oxidation of 5,10-methylenetetrahydrofolate to 5,10-methenyltetrahydrofolate and then the hydrolysis of 5,10-methenyltetrahydrofolate to 10-formyltetrahydrofolate. In Hyphomonas neptunium (strain ATCC 15444), this protein is Bifunctional protein FolD.